The following is a 209-amino-acid chain: Segregation and condensation protein B (209 aa).

The protein belongs to the ScpB family. Homodimer. Homodimerization may be required to stabilize the binding of ScpA to the Smc head domains. Component of a cohesin-like complex composed of ScpA, ScpB and the Smc homodimer, in which ScpA and ScpB bind to the head domain of Smc. The presence of the three proteins is required for the association of the complex with DNA.

The protein localises to the cytoplasm. In terms of biological role, participates in chromosomal partition during cell division. May act via the formation of a condensin-like complex containing Smc and ScpA that pull DNA away from mid-cell into both cell halves. The protein is Segregation and condensation protein B of Geobacillus thermodenitrificans (strain NG80-2).